The following is a 92-amino-acid chain: RQC P-site tRNA stabilizing factor (92 aa).

Residues 5–65 (MRLDKYLKVS…GPKIVTAKIE (61 aa)) form the S4 RNA-binding domain.

This sequence belongs to the RqcP family. In terms of assembly, associates with stalled 50S ribosomal subunits. Binds to RqcH, 23S rRNA and the P-site tRNA. Does not require RqcH for association with 50S subunits.

Functionally, key component of the ribosome quality control system (RQC), a ribosome-associated complex that mediates the extraction of incompletely synthesized nascent chains from stalled ribosomes and their subsequent degradation. RqcH recruits Ala-charged tRNA, and with RqcP directs the elongation of stalled nascent chains on 50S ribosomal subunits, leading to non-templated C-terminal alanine extensions (Ala tail). The Ala tail promotes nascent chain degradation. RqcP is associated with the translocation-like movement of the peptidyl-tRNA from the A-site into the P-site. The polypeptide is RQC P-site tRNA stabilizing factor (Listeria innocua serovar 6a (strain ATCC BAA-680 / CLIP 11262)).